A 618-amino-acid chain; its full sequence is Mitochondrial Rho GTPase 2 (618 aa).

Topologically, residues 1–591 (MKRDVRILLL…LNAVELGAAS (591 aa)) are cytoplasmic. In terms of domain architecture, Miro 1 spans 2–168 (KRDVRILLLG…FYYAQKAVLH (167 aa)). GTP-binding residues include glycine 16, lysine 17, threonine 18, and serine 19. Threonine 18 is a Mg(2+) binding site. Residues proline 35 and aspartate 57 each coordinate Mg(2+). GTP-binding residues include serine 59, asparagine 118, lysine 119, aspartate 121, alanine 149, and lysine 150. EF-hand domains lie at 184–219 (ACSR…CFGN) and 304–339 (LGYQ…FPCM). The Ca(2+) site is built by aspartate 197, aspartate 199, asparagine 201, glutamate 208, aspartate 317, aspartate 319, aspartate 321, and glutamate 328. The region spanning 416 to 579 (RNVFLCKVLG…YTKLATAATF (164 aa)) is the Miro 2 domain. GTP-binding residues include glycine 428, glycine 430, lysine 431, serine 432, and alanine 433. Serine 432 serves as a coordination point for Mg(2+). Glutamate 474 is a Mg(2+) binding site. 3 residues coordinate GTP: lysine 528, aspartate 530, and cysteine 559. The helical; Anchor for type IV membrane protein transmembrane segment at 592-614 (FWLRVALGAAVTALVGFTLYRVL) threads the bilayer. Residues 615–618 (AKNK) lie on the Mitochondrial intermembrane side of the membrane.

The protein belongs to the mitochondrial Rho GTPase family. As to quaternary structure, homodimer.

The protein resides in the mitochondrion outer membrane. The enzyme catalyses GTP + H2O = GDP + phosphate + H(+). It catalyses the reaction ATP + H2O = ADP + phosphate + H(+). The catalysed reaction is UTP + H2O = UDP + phosphate + H(+). In terms of biological role, atypical mitochondrial nucleoside-triphosphatase (NTPase) involved in mitochondrial trafficking. Probably involved in control of anterograde transport of mitochondria and their subcellular distribution. Can hydrolyze GTP, ATP and UTP. In Gallus gallus (Chicken), this protein is Mitochondrial Rho GTPase 2 (RHOT2).